Here is an 848-residue protein sequence, read N- to C-terminus: ATP-dependent Clp protease ATP-binding subunit ClpC1 (848 aa).

The Clp R domain occupies 2 to 144 (FERFTDRARK…RQQVIQLLSG (143 aa)). Repeat stretches follow at residues 5-70 (FTDR…IGQG) and 80-144 (FTPR…LLSG). The segment at 171 to 418 (LDQFGRNLTA…RMRIRRMTAP (248 aa)) is i. 216–223 (GEPGVGKT) serves as a coordination point for ATP. One can recognise a UVR domain in the interval 425–460 (DEKIAEARREKESAIDAQDFEKAASLRDREKTLVAQ). The segment at 479–670 (VDDEQIAEVL…VLIFTSNLGT (192 aa)) is II. Residue 553-560 (GPSGVGKT) coordinates ATP. A disordered region spans residues 821 to 848 (TGTRKPPAEPDLAKAGAHSAGGPEPAAR).

It belongs to the ClpA/ClpB family. ClpC subfamily.

In terms of biological role, ATP-dependent specificity component of the Clp protease. It directs the protease to specific substrates. Can perform chaperone functions in the absence of ClpP. This is ATP-dependent Clp protease ATP-binding subunit ClpC1 (clpC1) from Mycobacterium tuberculosis (strain CDC 1551 / Oshkosh).